A 306-amino-acid polypeptide reads, in one-letter code: Phospho-N-acetylmuramoyl-pentapeptide-transferase (306 aa).

Transmembrane regions (helical) follow at residues methionine 1–proline 21, glycine 49–leucine 69, leucine 75–valine 95, alanine 104–glutamine 124, isoleucine 130–glycine 150, glycine 160–serine 180, serine 182–tyrosine 202, valine 209–methionine 229, leucine 234–valine 254, and isoleucine 284–leucine 304.

The protein belongs to the glycosyltransferase 4 family. MraY subfamily. The cofactor is Mg(2+).

It is found in the cell inner membrane. The catalysed reaction is UDP-N-acetyl-alpha-D-muramoyl-L-alanyl-gamma-D-glutamyl-meso-2,6-diaminopimeloyl-D-alanyl-D-alanine + di-trans,octa-cis-undecaprenyl phosphate = di-trans,octa-cis-undecaprenyl diphospho-N-acetyl-alpha-D-muramoyl-L-alanyl-D-glutamyl-meso-2,6-diaminopimeloyl-D-alanyl-D-alanine + UMP. It participates in cell wall biogenesis; peptidoglycan biosynthesis. Catalyzes the initial step of the lipid cycle reactions in the biosynthesis of the cell wall peptidoglycan: transfers peptidoglycan precursor phospho-MurNAc-pentapeptide from UDP-MurNAc-pentapeptide onto the lipid carrier undecaprenyl phosphate, yielding undecaprenyl-pyrophosphoryl-MurNAc-pentapeptide, known as lipid I. The polypeptide is Phospho-N-acetylmuramoyl-pentapeptide-transferase (Fervidobacterium nodosum (strain ATCC 35602 / DSM 5306 / Rt17-B1)).